The following is a 339-amino-acid chain: MamK-like protein (339 aa).

Residues Y18–S19, D74, A162–T164, and K216–A220 contribute to the ATP site.

Belongs to the FtsA/MreB family. MamK subfamily. In terms of assembly, forms cytoplasmic filament polymers. Forms filaments with MamK.

Its subcellular location is the cytoplasm. It localises to the cytoskeleton. It catalyses the reaction ATP + H2O = ADP + phosphate + H(+). Its function is as follows. Protein with ATPase activity which forms pole-to-pole filaments in vivo, probably with MamK. Efficient filament formation requires MamK. Probably promotes turnover of MamK filaments, by providing a monomer pool. In vivo, in the absence of its paralog MamK, forms thin filaments from pole to pole. In vitro forms straight filaments and bundles in the absence of ATP. Filament formation is triggered by KCl and MgCl(2); polymerizes more slowly and makes thinner filaments than MamK. Expression in E.coli yields a filament in the cell's longitudinal axis; the protein nucleates at one pole or the cell septum. The protein is MamK-like protein of Paramagnetospirillum magneticum (strain ATCC 700264 / AMB-1) (Magnetospirillum magneticum).